Here is a 737-residue protein sequence, read N- to C-terminus: MAKQVFQTTFAGRELIVETGQVAKQANGSVVVRYGESTVLTAAVMSKKMATGDFFPLQVNYEEKMYAAGKFPGGFMKREGRPSTDATLTARLIDRPIRPMFAEGFRNEVQVINTVLSYDENASAPMAAMFGSSLALSISDIPFDGPIAGVQVGYVDGQIIINPSQEQAEQSLLELTVAGTKHAINMVESGAKELSEEIMLEALLKGHEAVKELIAFQEEIVAAVGKEKAEVELLHVDAELQAEIIAAYNSDLQKAVQVEEKLAREAATQAVKDQVTAVYEEKYANHEEFDRIMRDVAEILEQMEHAEVRRLITEDKVRPDGRKVDEIRPLDAVVDFLPRVHGSGLFTRGQTQALSVLTLAPMGETQIIDGLDPEYKKRFMHHYNFPQYSVGETGRYGAPGRREIGHGALGERALAQVLPSLEEFPYAIRLVAEVLESNGSSSQASICAGTLALMTGGVPIKAPVAGIAMGLISDGNNYTVLTDIQGLEDHFGDMDFKVAGTRDGITALQMDIKIQGITAEILTEALAQAKKARFEILDVIEATIPEVRPELAPTAPKIDTIKIDVDKIKIVIGKGGETIDKIIAETGVKIDIDEEGNVSIYSSDQDAINRAKEIIAGLVREAKVDEVYRAKVVRIEKFGAFVNLFDKTDALVHISEMAWTRTNRVEDLVEIGDEVDVKVIKIDEKGRIDASMKALLPRPPKPEHDEKGEKSERPHRPRHHKDHKPKKEFTETPKDSE.

Mg(2+) is bound by residues aspartate 489 and aspartate 495. The KH domain occupies 556–615; that stretch reads PKIDTIKIDVDKIKIVIGKGGETIDKIIAETGVKIDIDEEGNVSIYSSDQDAINRAKEII. The S1 motif domain occupies 625-693; the sequence is DEVYRAKVVR…EKGRIDASMK (69 aa). Positions 691 to 737 are disordered; the sequence is SMKALLPRPPKPEHDEKGEKSERPHRPRHHKDHKPKKEFTETPKDSE. Residues 700-714 show a composition bias toward basic and acidic residues; that stretch reads PKPEHDEKGEKSERP. The segment covering 715–724 has biased composition (basic residues); that stretch reads HRPRHHKDHK. Residues 725–737 are compositionally biased toward basic and acidic residues; it reads PKKEFTETPKDSE.

The protein belongs to the polyribonucleotide nucleotidyltransferase family. Requires Mg(2+) as cofactor.

The protein resides in the cytoplasm. The enzyme catalyses RNA(n+1) + phosphate = RNA(n) + a ribonucleoside 5'-diphosphate. Involved in mRNA degradation. Catalyzes the phosphorolysis of single-stranded polyribonucleotides processively in the 3'- to 5'-direction. The protein is Polyribonucleotide nucleotidyltransferase of Streptococcus pneumoniae (strain ATCC 700669 / Spain 23F-1).